A 400-amino-acid chain; its full sequence is Phosphoglycerate kinase (400 aa).

Substrate contacts are provided by residues 21–23, Arg36, 59–62, Arg118, and Arg151; these read DFN and HCSR. ATP contacts are provided by residues Lys201, Glu323, and 353 to 356; that span reads GGDT.

The protein belongs to the phosphoglycerate kinase family. In terms of assembly, monomer.

The protein localises to the cytoplasm. It catalyses the reaction (2R)-3-phosphoglycerate + ATP = (2R)-3-phospho-glyceroyl phosphate + ADP. Its pathway is carbohydrate degradation; glycolysis; pyruvate from D-glyceraldehyde 3-phosphate: step 2/5. This is Phosphoglycerate kinase from Bartonella bacilliformis (strain ATCC 35685 / KC583 / Herrer 020/F12,63).